Here is a 245-residue protein sequence, read N- to C-terminus: Uridylate kinase (245 aa).

Position 20-23 (20-23 (KLSG)) interacts with ATP. Gly60 is a UMP binding site. Residues Gly61 and Arg65 each coordinate ATP. UMP contacts are provided by residues Asp80 and 141-148 (AGLPYFST). Positions 175 and 178 each coordinate ATP.

Belongs to the UMP kinase family. In terms of assembly, homohexamer.

The protein localises to the cytoplasm. It carries out the reaction UMP + ATP = UDP + ADP. It participates in pyrimidine metabolism; CTP biosynthesis via de novo pathway; UDP from UMP (UMPK route): step 1/1. Its activity is regulated as follows. Inhibited by UTP. Functionally, catalyzes the reversible phosphorylation of UMP to UDP. This is Uridylate kinase from Paenarthrobacter aurescens (strain TC1).